The following is a 1969-amino-acid chain: Echinoderm microtubule-associated protein-like 5 (1969 aa).

10 WD repeats span residues 59–100 (GHSD…TISV), 104–145 (VHTH…MLSM), 148–187 (GHTD…LTPK), 195–233 (GDLQ…RTIQ), 235–273 (AHAA…TVID), 280–321 (GYKG…LIMQ), 323–362 (HCEG…LIAR), 406–445 (DRKE…KKVG), 449–488 (GSLS…EVTS), and 561–601 (GHSA…KLKD). The segment at 609–633 (ESLADSHSDESDSDLSDVPELDSEI) is disordered. Positions 619–633 (SDSDLSDVPELDSEI) are enriched in acidic residues. WD repeat units lie at residues 725–766 (GHDD…PLSI), 770–811 (HHQY…KLSI), 814–853 (GSKD…LIGR), 861–900 (GKND…KTVK), 901–940 (AHDG…KTYA), 996–1035 (HMEG…CMLA), 1038–1077 (KLKK…DLVS), 1080–1120 (HRKD…RVGI), and 1236–1276 (AHST…YREK). Disordered stretches follow at residues 1274–1297 (REKR…YDSD) and 1326–1355 (QQKE…NVGK). Residues 1281-1294 (SEESDIDSEEDGGY) are compositionally biased toward acidic residues. Positions 1326–1337 (QQKEPSIDERPP) are enriched in basic and acidic residues. 10 WD repeats span residues 1412 to 1463 (EHND…TLSI), 1467 to 1508 (YHSK…KIAS), 1511 to 1550 (GHNQ…LLSK), 1560 to 1598 (ARMQ…RIVA), 1600 to 1646 (AHNG…RAFR), 1691 to 1731 (GHVD…MLNK), 1733 to 1774 (NLGH…GKKR), 1775 to 1814 (DRRC…TLNR), 1887 to 1926 (AEKA…KFAK), and 1932 to 1969 (GHSP…HTPH).

The protein belongs to the WD repeat EMAP family.

Its subcellular location is the cytoplasm. It is found in the cytoskeleton. May modify the assembly dynamics of microtubules, such that microtubules are slightly longer, but more dynamic. The chain is Echinoderm microtubule-associated protein-like 5 (EML5) from Homo sapiens (Human).